Here is a 215-residue protein sequence, read N- to C-terminus: 3-isopropylmalate dehydratase small subunit (215 aa).

It belongs to the LeuD family. LeuD type 1 subfamily. In terms of assembly, heterodimer of LeuC and LeuD.

It carries out the reaction (2R,3S)-3-isopropylmalate = (2S)-2-isopropylmalate. Its pathway is amino-acid biosynthesis; L-leucine biosynthesis; L-leucine from 3-methyl-2-oxobutanoate: step 2/4. Catalyzes the isomerization between 2-isopropylmalate and 3-isopropylmalate, via the formation of 2-isopropylmaleate. The sequence is that of 3-isopropylmalate dehydratase small subunit from Leptothrix cholodnii (strain ATCC 51168 / LMG 8142 / SP-6) (Leptothrix discophora (strain SP-6)).